We begin with the raw amino-acid sequence, 354 residues long: Dihydroorotate dehydrogenase (quinone) (354 aa).

FMN contacts are provided by residues 61–65 and alanine 85; that span reads AGYDK. A substrate-binding site is contributed by lysine 65. 110 to 114 is a binding site for substrate; sequence NRFGF. Positions 139 and 170 each coordinate FMN. Asparagine 170 lines the substrate pocket. The active-site Nucleophile is the serine 173. Asparagine 175 contacts substrate. Residues lysine 211 and threonine 239 each contribute to the FMN site. 240-241 lines the substrate pocket; it reads NT. Residues glycine 261, glycine 290, and 311-312 contribute to the FMN site; that span reads YT.

The protein belongs to the dihydroorotate dehydrogenase family. Type 2 subfamily. As to quaternary structure, monomer. Requires FMN as cofactor.

It localises to the cell membrane. The enzyme catalyses (S)-dihydroorotate + a quinone = orotate + a quinol. It participates in pyrimidine metabolism; UMP biosynthesis via de novo pathway; orotate from (S)-dihydroorotate (quinone route): step 1/1. Its function is as follows. Catalyzes the conversion of dihydroorotate to orotate with quinone as electron acceptor. This Cereibacter sphaeroides (strain ATCC 17023 / DSM 158 / JCM 6121 / CCUG 31486 / LMG 2827 / NBRC 12203 / NCIMB 8253 / ATH 2.4.1.) (Rhodobacter sphaeroides) protein is Dihydroorotate dehydrogenase (quinone).